The sequence spans 180 residues: Large ribosomal subunit protein uL6 (180 aa).

This sequence belongs to the universal ribosomal protein uL6 family. In terms of assembly, part of the 50S ribosomal subunit.

In terms of biological role, this protein binds to the 23S rRNA, and is important in its secondary structure. It is located near the subunit interface in the base of the L7/L12 stalk, and near the tRNA binding site of the peptidyltransferase center. In Clostridium botulinum (strain ATCC 19397 / Type A), this protein is Large ribosomal subunit protein uL6.